The primary structure comprises 874 residues: Alanine--tRNA ligase (874 aa).

Histidine 563, histidine 567, cysteine 665, and histidine 669 together coordinate Zn(2+).

The protein belongs to the class-II aminoacyl-tRNA synthetase family. Requires Zn(2+) as cofactor.

It localises to the cytoplasm. It catalyses the reaction tRNA(Ala) + L-alanine + ATP = L-alanyl-tRNA(Ala) + AMP + diphosphate. Catalyzes the attachment of alanine to tRNA(Ala) in a two-step reaction: alanine is first activated by ATP to form Ala-AMP and then transferred to the acceptor end of tRNA(Ala). Also edits incorrectly charged Ser-tRNA(Ala) and Gly-tRNA(Ala) via its editing domain. The sequence is that of Alanine--tRNA ligase from Histophilus somni (strain 2336) (Haemophilus somnus).